Here is a 185-residue protein sequence, read N- to C-terminus: Elongation factor P (185 aa).

This sequence belongs to the elongation factor P family.

The protein resides in the cytoplasm. It functions in the pathway protein biosynthesis; polypeptide chain elongation. In terms of biological role, involved in peptide bond synthesis. Stimulates efficient translation and peptide-bond synthesis on native or reconstituted 70S ribosomes in vitro. Probably functions indirectly by altering the affinity of the ribosome for aminoacyl-tRNA, thus increasing their reactivity as acceptors for peptidyl transferase. This is Elongation factor P from Pseudothermotoga lettingae (strain ATCC BAA-301 / DSM 14385 / NBRC 107922 / TMO) (Thermotoga lettingae).